The primary structure comprises 128 residues: Small ribosomal subunit protein uS8c (128 aa).

It belongs to the universal ribosomal protein uS8 family. In terms of assembly, part of the 30S ribosomal subunit.

The protein localises to the plastid. Its subcellular location is the chloroplast. Its function is as follows. One of the primary rRNA binding proteins, it binds directly to 16S rRNA central domain where it helps coordinate assembly of the platform of the 30S subunit. In Gnetum parvifolium (Small-leaved jointfir), this protein is Small ribosomal subunit protein uS8c (rps8).